A 367-amino-acid polypeptide reads, in one-letter code: B2 bradykinin receptor (367 aa).

Over 1-36 the chain is Extracellular; sequence MLNLTSQVPEPALNGTLPQSSSCFHSDWWNWLNTIQ. N-linked (GlcNAc...) asparagine glycans are attached at residues asparagine 3 and asparagine 14. A helical transmembrane segment spans residues 37–60; that stretch reads APFLWVLFLLAALENIFVLSVFCL. Topologically, residues 61 to 69 are cytoplasmic; it reads HKNSCTVAE. A helical transmembrane segment spans residues 70 to 94; that stretch reads IYLGNLAMADLILALGLPFWAITIA. The Extracellular segment spans residues 95 to 107; that stretch reads NHFDWLFGEVLCR. Cysteine 106 and cysteine 187 are oxidised to a cystine. A helical membrane pass occupies residues 108 to 129; it reads VVNTMIYMNLYSSICFLMLVSI. At 130-151 the chain is on the cytoplasmic side; it reads DRYLALVKTMSMGRMRGVRWAK. At tyrosine 132 the chain carries Phosphotyrosine. A helical transmembrane segment spans residues 152-174; it reads LYSLVIWGCTLLLSSPMLAFRTM. At 175 to 197 the chain is on the extracellular side; sequence HEYAAEGHNVTACIIKYPSRSWM. N-linked (GlcNAc...) asparagine glycosylation occurs at asparagine 183. A helical transmembrane segment spans residues 198–224; it reads VFTNILLNSVGFLLPLSIITYCTVQIL. Residues 225 to 243 lie on the Cytoplasmic side of the membrane; that stretch reads QVLRNNEMQKFKEIQTERK. A helical membrane pass occupies residues 244 to 268; it reads ATVLVLAVLLLFVVCWLPFQISTFL. Residues 269 to 287 lie on the Extracellular side of the membrane; sequence DTLLRLGVLSGCWDEHAVD. A helical membrane pass occupies residues 288 to 311; the sequence is VITQISSYVAYSNSGLNPLVYVIV. Residues 312 to 367 lie on the Cytoplasmic side of the membrane; the sequence is GKRFRKKSREVYRVLCQKGGCMGEPVQMENSMGTLRTSISVERQIHKLQDWAGKKQ. Tyrosine 323 is subject to Phosphotyrosine. Cysteine 327 carries S-palmitoyl cysteine lipidation. Serine 342 is modified (phosphoserine). At threonine 345 the chain carries Phosphothreonine. A phosphoserine; by GRK6 mark is found at serine 349 and serine 351.

It belongs to the G-protein coupled receptor 1 family. Bradykinin receptor subfamily. BDKRB2 sub-subfamily. In terms of assembly, forms a complex with PECAM1 and GNAQ. Interacts with PECAM1.

The protein localises to the cell membrane. Its function is as follows. Receptor for bradykinin. It is associated with G proteins that activate a phosphatidylinositol-calcium second messenger system. The protein is B2 bradykinin receptor (BDKRB2) of Sus scrofa (Pig).